A 121-amino-acid polypeptide reads, in one-letter code: Ribonuclease P protein component (121 aa).

It belongs to the RnpA family. In terms of assembly, consists of a catalytic RNA component (M1 or rnpB) and a protein subunit.

The catalysed reaction is Endonucleolytic cleavage of RNA, removing 5'-extranucleotides from tRNA precursor.. RNaseP catalyzes the removal of the 5'-leader sequence from pre-tRNA to produce the mature 5'-terminus. It can also cleave other RNA substrates such as 4.5S RNA. The protein component plays an auxiliary but essential role in vivo by binding to the 5'-leader sequence and broadening the substrate specificity of the ribozyme. The protein is Ribonuclease P protein component of Geobacillus thermodenitrificans (strain NG80-2).